We begin with the raw amino-acid sequence, 193 residues long: Orotate phosphoribosyltransferase (193 aa).

117–125 is a binding site for 5-phospho-alpha-D-ribose 1-diphosphate; that stretch reads EDVVTTGLS. Positions 121 and 149 each coordinate orotate.

It belongs to the purine/pyrimidine phosphoribosyltransferase family. PyrE subfamily. Homodimer. The cofactor is Mg(2+).

The catalysed reaction is orotidine 5'-phosphate + diphosphate = orotate + 5-phospho-alpha-D-ribose 1-diphosphate. It functions in the pathway pyrimidine metabolism; UMP biosynthesis via de novo pathway; UMP from orotate: step 1/2. In terms of biological role, catalyzes the transfer of a ribosyl phosphate group from 5-phosphoribose 1-diphosphate to orotate, leading to the formation of orotidine monophosphate (OMP). The chain is Orotate phosphoribosyltransferase from Erythrobacter litoralis (strain HTCC2594).